The following is a 22-amino-acid chain: uncharacterized protein (22 aa).

The helical transmembrane segment at 3–22 threads the bilayer; it reads MFITGYDINQKQKKRYGLRG.

This sequence belongs to the asfivirus C84L family.

It is found in the host membrane. This is an uncharacterized protein from Ornithodoros (relapsing fever ticks).